The primary structure comprises 624 residues: Probable potassium transport system protein Kup 1 (624 aa).

A run of 12 helical transmembrane segments spans residues 10-30 (LALG…LYAL), 48-68 (LSLI…MIIF), 94-114 (PLFY…GMLT), 133-153 (LYPY…SLQA), 159-179 (IGYL…ILGI), 210-230 (LLLG…ADIG), 242-262 (FFAA…NLIV), 270-290 (PFFM…ATVA), 331-351 (IYVP…CLAF), 363-383 (IAVN…AISI), 388-408 (IFNV…FLGA), and 413-433 (FITG…IMYS).

This sequence belongs to the HAK/KUP transporter (TC 2.A.72) family.

Its subcellular location is the cell inner membrane. It carries out the reaction K(+)(in) + H(+)(in) = K(+)(out) + H(+)(out). Transport of potassium into the cell. Likely operates as a K(+):H(+) symporter. In Legionella pneumophila (strain Lens), this protein is Probable potassium transport system protein Kup 1.